A 389-amino-acid chain; its full sequence is Aspartic protease 6 (389 aa).

A signal peptide spans Met-1 to Ala-15. Residues Tyr-71–Ala-384 form the Peptidase A1 domain. Asn-74 carries N-linked (GlcNAc...) asparagine glycosylation. Asp-89 is an active-site residue. Residues Cys-102 and Cys-106 are joined by a disulfide bond. Asp-277 is a catalytic residue. A disulfide bond links Cys-312 and Cys-344.

This sequence belongs to the peptidase A1 family. In terms of processing, glycosylated. Has phosphorylcholine-substituted oligosaccharide N-glycans. As to expression, expressed in intestine, muscles, pharynx and hypodermis.

It localises to the secreted. In terms of biological role, aspartic protease. In Caenorhabditis elegans, this protein is Aspartic protease 6.